The following is a 115-amino-acid chain: MPRATNKPATRRRRKKILNKAKGYWGRRSKVYKVAKHAVEKGLQYAYRDRRQKKRRFRRLWITRINAATRQHDVSYSQFMGQYRKSDLDMNRKVLADLAVHDPDAFEQIVDHVME.

The protein belongs to the bacterial ribosomal protein bL20 family.

Functionally, binds directly to 23S ribosomal RNA and is necessary for the in vitro assembly process of the 50S ribosomal subunit. It is not involved in the protein synthesizing functions of that subunit. This Salinibacter ruber (strain DSM 13855 / M31) protein is Large ribosomal subunit protein bL20.